The sequence spans 588 residues: MAEVDNGGAQKSSASRKKRYQELDPETRMKRVAQNRAAQKAFRERKERKMKELERKVVDLENLTKLNEVETNFLRDQLSILVKELRKYRPETKQDHKVLKYLEKHKGGAAGAGNGAATGSVSTSTRHTDLAASNANRVSKDSSILPGAKIIRQDLESFNENRHFNVTGQLTPPGNTSSSTTANSVAANAKKQSIPHSDSSDSNESKNTWNTDPTSSEDWLDDVMTSHKQISRGQSGSGIDFNNFFDEQVSEFCTKLNQACGTKACPIPQSKSAATTPLPGTSSNGNSNSPMIINDTMGDVSLNMQGNEHGNATNNLVTDPAFLSNTWDDMSPASNQHSTGGAPGFGQLGFGDNLLGNDILFSPNSPAYSPSVLGSGRTQEVYRSPAVQKVVEKENESKSVNFPFINSSLAFPGDYDNNFFRETTDLNFDDNDQDDNFTNSNDLVNDYFTTNIPDTDNSDSALIANGLVKEEPSMQTEDTFKVQNTNDMLNSSRMKETIDNQNIGEKTTKDDNEDDDEDDENDNTVVPSRDDGLLRCSEIWDRITAHPKYSDIDIDGLCSELMAKAKCSERGVVINADDVQVALNKHMS.

A disordered region spans residues 1 to 49 (MAEVDNGGAQKSSASRKKRYQELDPETRMKRVAQNRAAQKAFRERKERK). Residues 20–29 (YQELDPETRM) are compositionally biased toward basic and acidic residues. In terms of domain architecture, bZIP spans 25 to 88 (PETRMKRVAQ…SILVKELRKY (64 aa)). Residues 28–51 (RMKRVAQNRAAQKAFRERKERKMK) are basic motif. Residues 53–60 (LERKVVDL) are leucine-zipper. Residues 164–174 (FNVTGQLTPPG) are compositionally biased toward polar residues. The tract at residues 164-219 (FNVTGQLTPPGNTSSSTTANSVAANAKKQSIPHSDSSDSNESKNTWNTDPTSSEDW) is disordered. A compositionally biased stretch (low complexity) spans 175–189 (NTSSSTTANSVAANA). Transcription activation regions lie at residues 189–327 (AKKQ…SNTW) and 376–477 (GRTQ…MQTE). A compositionally biased stretch (polar residues) spans 190 to 217 (KKQSIPHSDSSDSNESKNTWNTDPTSSE). The n-CRD stretch occupies residues 253-265 (CTKLNQACGTKAC). Residues 487–529 (DMLNSSRMKETIDNQNIGEKTTKDDNEDDDEDDENDNTVVPSR) form a disordered region. Acidic residues predominate over residues 511–522 (DNEDDDEDDEND). A c-CRD region spans residues 536 to 567 (CSEIWDRITAHPKYSDIDIDGLCSELMAKAKC). The short motif at 552–559 (IDIDGLCS) is the Nuclear export signal element.

Its subcellular location is the nucleus. In terms of biological role, transcription factor that plays a critical role in response to various stresses and reduces the stress through transcriptional activation of its target genes including multidrug transporter FLR1. This chain is bZip transcription factor GAP1, found in Candida glabrata (strain ATCC 2001 / BCRC 20586 / JCM 3761 / NBRC 0622 / NRRL Y-65 / CBS 138) (Yeast).